The sequence spans 269 residues: tRNA pseudouridine synthase A (269 aa).

D51 (nucleophile) is an active-site residue. Y109 is a binding site for substrate.

The protein belongs to the tRNA pseudouridine synthase TruA family. As to quaternary structure, homodimer.

It catalyses the reaction uridine(38/39/40) in tRNA = pseudouridine(38/39/40) in tRNA. In terms of biological role, formation of pseudouridine at positions 38, 39 and 40 in the anticodon stem and loop of transfer RNAs. The chain is tRNA pseudouridine synthase A from Haemophilus influenzae (strain PittGG).